Reading from the N-terminus, the 403-residue chain is F-box only protein 22 (403 aa).

M1 is subject to N-acetylmethionine. The F-box domain occupies 21 to 67 (FVLSNLAEVVERVLTFLPAKALLRVACVCRLWRECVRRVLRTHRSVT). A Phosphothreonine modification is found at T127. Position 128 is a phosphoserine (S128). Residue K194 is modified to N6-acetyllysine.

Directly interacts with SKP1 and CUL1. Interacts (via C-terminal) with KDM4A. Interacts with TP53. Interacts with MTOR; this interaction promotes 'lys-27'-linked ubiquitination of MTOR. In terms of assembly, (Microbial infection) Interacts with SARS_COV-2 protein NSP5; this interaction attenuates NSP5-mediated inhibition of innate immunity. In terms of processing, phosphorylated by EIF2AK4 at Thr-127 causes cytoplasmic retention of FBXO22. Predominantly expressed in liver, also enriched in cardiac muscle.

It is found in the cytoplasm. It localises to the nucleus. The protein localises to the myofibril. The protein resides in the sarcomere. Its subcellular location is the z line. Substrate-recognition component of the SCF (SKP1-CUL1-F-box protein)-type E3 ubiquitin ligase complex that is implicated in the control of various cellular processes such as cell cycle control, transcriptional regulation, DNA damage repair, and apoptosis. Promotes the proteasome-dependent degradation of key sarcomeric proteins, such as alpha-actinin (ACTN2) and filamin-C (FLNC), essential for maintenance of normal contractile function. Acts as a key regulator of histone methylation marks namely H3K9 and H3K36 methylation through the regulation of histone demethylase KDM4A protein levels. In complex with KDM4A, also regulates the abundance of TP53 by targeting methylated TP53 for degradation at the late senescent stage. Under oxidative stress, promotes the ubiquitination and degradation of BACH1. Mechanistically, reactive oxygen species (ROS) covalently modify cysteine residues on the bZIP domain of BACH1, leading to its release from chromatin and making it accessible to FBXO22. Upon amino acid depletion, mediates 'Lys-27'-linked ubiquitination of MTOR and thereby inhibits substrate recruitment to mTORC1. Also inhibits SARS-CoV-2 replication by inducing NSP5 degradation. This chain is F-box only protein 22 (FBXO22), found in Homo sapiens (Human).